The primary structure comprises 281 residues: MSQTSTLKGQCIAEFLGTGLLIFFGVGCVAALKVAGASFGQWEISVIWGLGVAMAIYLTAGVSGAHLNPAVTIALWLFACFDKRKVIPFIVSQVAGAFCAAALVYGLYYNLFFDFEQTHHIVRGSVESVDLAGTFSTYPNPHINFVQAFAVEMVITAILMGLILALTDDGNGVPRGPLAPLLIGLLIAVIGASMGPLTGFAMNPARDFGPKVFAWLAGWGNVAFTGGRDIPYFLVPLFGPIVGAIVGAFAYRKLIGRHLPCDICVVEEKETTTPSEQKASL.

Residues 1–5 (MSQTS) lie on the Cytoplasmic side of the membrane. A helical membrane pass occupies residues 6–34 (TLKGQCIAEFLGTGLLIFFGVGCVAALKV). The Periplasmic segment spans residues 35-39 (AGASF). The chain crosses the membrane as a helical span at residues 40 to 60 (GQWEISVIWGLGVAMAIYLTA). Over 61–63 (GVS) the chain is Cytoplasmic. An intramembrane segment occupies 64-67 (GAHL). The NPA 1 signature appears at 68-70 (NPA). An intramembrane region (helical) is located at residues 68-78 (NPAVTIALWLF). The Cytoplasmic segment spans residues 79-84 (ACFDKR). Residues 85–108 (KVIPFIVSQVAGAFCAAALVYGLY) form a helical membrane-spanning segment. Topologically, residues 109 to 143 (YNLFFDFEQTHHIVRGSVESVDLAGTFSTYPNPHI) are periplasmic. The chain crosses the membrane as a helical span at residues 144–169 (NFVQAFAVEMVITAILMGLILALTDD). Residues 170 to 177 (GNGVPRGP) lie on the Cytoplasmic side of the membrane. A helical membrane pass occupies residues 178-194 (LAPLLIGLLIAVIGASM). Residues 195 to 198 (GPLT) are Periplasmic-facing. An intramembrane segment occupies 199 to 202 (GFAM). Positions 203–205 (NPA) match the NPA 2 motif. The helical intramembrane region spans 203-216 (NPARDFGPKVFAWL). Over 217-231 (AGWGNVAFTGGRDIP) the chain is Periplasmic. Residues 232–254 (YFLVPLFGPIVGAIVGAFAYRKL) traverse the membrane as a helical segment. Residues 255–281 (IGRHLPCDICVVEEKETTTPSEQKASL) are Cytoplasmic-facing.

The protein belongs to the MIP/aquaporin (TC 1.A.8) family. In terms of assembly, homotetramer.

It is found in the cell inner membrane. The catalysed reaction is glycerol(in) = glycerol(out). Its function is as follows. Mediates glycerol diffusion across the cytoplasmic membrane via a pore-type mechanism. In Escherichia coli O157:H7, this protein is Glycerol uptake facilitator protein (glpF).